The following is an 834-amino-acid chain: Periplasmic nitrate reductase (834 aa).

Positions 1 to 32 form a signal peptide, tat-type signal; it reads MTDMKIDRRQMLKLEAAAIAAAAAGMPSTSLA. The 57-residue stretch at 44 to 100 folds into the 4Fe-4S Mo/W bis-MGD-type domain; sequence LKWDKAACRFCGTGCSVMVATKDNRVVATHGDIKAEVNRGLNCVKGYFLSKIMYGHD. [4Fe-4S] cluster contacts are provided by cysteine 51, cysteine 54, cysteine 58, and cysteine 86. Residues lysine 88, glutamine 155, asparagine 180, cysteine 184, 217–224, 248–252, 267–269, methionine 378, glutamine 382, asparagine 488, 514–515, lysine 537, aspartate 564, and 724–733 each bind Mo-bis(molybdopterin guanine dinucleotide); these read WGSNMAEM, STFEH, QTD, SD, and TGRVVEHWHS. Tryptophan 800 provides a ligand contact to substrate. Asparagine 808 and lysine 825 together coordinate Mo-bis(molybdopterin guanine dinucleotide).

It belongs to the prokaryotic molybdopterin-containing oxidoreductase family. NasA/NapA/NarB subfamily. As to quaternary structure, component of the periplasmic nitrate reductase NapAB complex composed of NapA and NapB. The cofactor is [4Fe-4S] cluster. It depends on Mo-bis(molybdopterin guanine dinucleotide) as a cofactor. In terms of processing, predicted to be exported by the Tat system. The position of the signal peptide cleavage has not been experimentally proven.

The protein localises to the periplasm. It carries out the reaction 2 Fe(II)-[cytochrome] + nitrate + 2 H(+) = 2 Fe(III)-[cytochrome] + nitrite + H2O. Its function is as follows. Catalytic subunit of the periplasmic nitrate reductase complex NapAB. Receives electrons from NapB and catalyzes the reduction of nitrate to nitrite. This chain is Periplasmic nitrate reductase, found in Bradyrhizobium sp. (strain BTAi1 / ATCC BAA-1182).